Reading from the N-terminus, the 219-residue chain is Ribose-5-phosphate isomerase A (219 aa).

Substrate-binding positions include 28-31 (TGST), 81-84 (DGAD), and 94-97 (KGGG). The active-site Proton acceptor is Glu103. Lys121 is a binding site for substrate.

This sequence belongs to the ribose 5-phosphate isomerase family. Homodimer.

It catalyses the reaction aldehydo-D-ribose 5-phosphate = D-ribulose 5-phosphate. The protein operates within carbohydrate degradation; pentose phosphate pathway; D-ribose 5-phosphate from D-ribulose 5-phosphate (non-oxidative stage): step 1/1. In terms of biological role, catalyzes the reversible conversion of ribose-5-phosphate to ribulose 5-phosphate. This Erwinia tasmaniensis (strain DSM 17950 / CFBP 7177 / CIP 109463 / NCPPB 4357 / Et1/99) protein is Ribose-5-phosphate isomerase A.